We begin with the raw amino-acid sequence, 433 residues long: Homogentisate 1,2-dioxygenase (433 aa).

The Proton acceptor role is filled by His288. His331 and Glu337 together coordinate Fe cation. Positions 346 and 367 each coordinate homogentisate. Residue His367 coordinates Fe cation.

This sequence belongs to the homogentisate dioxygenase family. In terms of assembly, hexamer; dimer of trimers. Fe cation serves as cofactor.

The catalysed reaction is homogentisate + O2 = 4-maleylacetoacetate + H(+). It participates in amino-acid degradation; L-phenylalanine degradation; acetoacetate and fumarate from L-phenylalanine: step 4/6. Functionally, involved in the catabolism of homogentisate (2,5-dihydroxyphenylacetate or 2,5-OH-PhAc), a central intermediate in the degradation of phenylalanine and tyrosine. Catalyzes the oxidative ring cleavage of the aromatic ring of homogentisate to yield maleylacetoacetate. This chain is Homogentisate 1,2-dioxygenase, found in Pseudomonas entomophila (strain L48).